Here is a 212-residue protein sequence, read N- to C-terminus: Pyrrolidone-carboxylate peptidase (212 aa).

Residues Glu-78, Cys-141, and His-165 contribute to the active site.

Belongs to the peptidase C15 family. Homotetramer.

It localises to the cytoplasm. The catalysed reaction is Release of an N-terminal pyroglutamyl group from a polypeptide, the second amino acid generally not being Pro.. In terms of biological role, removes 5-oxoproline from various penultimate amino acid residues except L-proline. The polypeptide is Pyrrolidone-carboxylate peptidase (Staphylococcus aureus (strain Mu3 / ATCC 700698)).